Consider the following 666-residue polypeptide: Frizzled-3 (666 aa).

Positions 1-22 are cleaved as a signal peptide; sequence MAMTWIVFSLWPLTVFMGHIGG. In terms of domain architecture, FZ spans 23–136; sequence HSLFSCEPIT…CSRFPDCDEP (114 aa). The Extracellular portion of the chain corresponds to 23–205; it reads HSLFSCEPIT…REELSFARYF (183 aa). 5 disulfide bridges follow: Cys-28/Cys-89, Cys-36/Cys-82, Cys-73/Cys-110, Cys-99/Cys-133, and Cys-103/Cys-127. Asn-42 carries an N-linked (GlcNAc...) asparagine glycan. The chain crosses the membrane as a helical span at residues 206-226; the sequence is IGLISIICLSATLFTFLTFLI. The Cytoplasmic portion of the chain corresponds to 227 to 237; it reads DVTRFRYPERP. The helical transmembrane segment at 238–258 threads the bilayer; sequence IIFYAVCYMMVSLIFFIGFLL. Over 259-288 the chain is Extracellular; it reads EDRVACNASIPAQYKASTVTQGSHNKACTM. Asn-265 is a glycosylation site (N-linked (GlcNAc...) asparagine). The helical transmembrane segment at 289 to 309 threads the bilayer; it reads LFMILYFFTMAGSVWWVILTI. The Cytoplasmic segment spans residues 310–328; it reads TWFLAAVPKWGSEAIEKKA. A helical membrane pass occupies residues 329-349; the sequence is LLFHASAWGIPGTLTIILLAM. Residues 350–374 are Extracellular-facing; the sequence is NKIEGDNISGVCFVGLYDVDALRYF. An N-linked (GlcNAc...) asparagine glycan is attached at Asn-356. The helical transmembrane segment at 375-395 threads the bilayer; it reads VLAPLCLYVVVGVSLLLAGII. Over 396 to 420 the chain is Cytoplasmic; it reads SLNRVRIEIPLEKENQDKLVKFMIR. A helical transmembrane segment spans residues 421–441; that stretch reads IGVFSILYLVPLLVVIGCYFY. Over 442–477 the chain is Extracellular; it reads EQAYRGIWETTWIQERCREYHIPCPYQVTQMSRPDL. Residues 478 to 498 traverse the membrane as a helical segment; it reads ILFLMKYLMALIVGIPSVFWV. The Cytoplasmic segment spans residues 499-666; the sequence is GSKKTCFEWA…RVIEEDGTSA (168 aa). Residues 502 to 507 carry the Lys-Thr-X-X-X-Trp motif, mediates interaction with the PDZ domain of Dvl family members motif; that stretch reads KTCFEW. Positions 538–666 are disordered; that stretch reads RDPNTPIIRK…RVIEEDGTSA (129 aa). Positions 550 to 565 are enriched in polar residues; that stretch reads GTSTQGTSTHASSTQL. Residues 617 to 638 show a composition bias toward basic and acidic residues; sequence LTDHSRHSSSHRLNEQSRHSSI. The span at 639 to 656 shows a compositional bias: polar residues; sequence RDLSNNPMTHITHGTSMN.

It belongs to the G-protein coupled receptor Fz/Smo family. Interacts with VANGL2. In terms of processing, ubiquitinated by ZNRF3, leading to its degradation by the proteasome. As to expression, widely expressed. Relatively high expression in the CNS, including regions of the limbic system, in kidney, pancreas, skeletal muscle, uterus and testis.

It is found in the membrane. Its subcellular location is the cell membrane. The protein localises to the cell surface. It localises to the apical cell membrane. In terms of biological role, receptor for Wnt proteins. Most of frizzled receptors are coupled to the beta-catenin canonical signaling pathway, which leads to the activation of disheveled proteins, inhibition of GSK-3 kinase, nuclear accumulation of beta-catenin and activation of Wnt target genes. A second signaling pathway involving PKC and calcium fluxes has been seen for some family members, but it is not yet clear if it represents a distinct pathway or if it can be integrated in the canonical pathway, as PKC seems to be required for Wnt-mediated inactivation of GSK-3 kinase. Both pathways seem to involve interactions with G-proteins. Activation by Wnt5A stimulates PKC activity via a G-protein-dependent mechanism. Involved in transduction and intercellular transmission of polarity information during tissue morphogenesis and/or in differentiated tissues. Plays a role in controlling early axon growth and guidance processes necessary for the formation of a subset of central and peripheral major fiber tracts. Required for the development of major fiber tracts in the central nervous system, including: the anterior commissure, the corpus callosum, the thalamocortical, corticothalamic and nigrostriatal tracts, the corticospinal tract, the fasciculus retroflexus, the mammillothalamic tract, the medial lemniscus, and ascending fiber tracts from the spinal cord to the brain. In the peripheral nervous system, controls axon growth in distinct populations of cranial and spinal motor neurons, including the facial branchimotor nerve, the hypoglossal nerve, the phrenic nerve, and motor nerves innervating dorsal limbs. Involved in the migration of cranial neural crest cells. May also be implicated in the transmission of sensory information from the trunk and limbs to the brain. Controls commissural sensory axons guidance after midline crossing along the anterior-posterior axis in the developing spinal cord in a Wnt-dependent signaling pathway. Together with FZD6, is involved in the neural tube closure and plays a role in the regulation of the establishment of planar cell polarity (PCP), particularly in the orientation of asymmetric bundles of stereocilia on the apical faces of a subset of auditory and vestibular sensory cells located in the inner ear. Promotes neurogenesis by maintaining sympathetic neuroblasts within the cell cycle in a beta-catenin-dependent manner. This is Frizzled-3 (FZD3) from Homo sapiens (Human).